A 183-amino-acid chain; its full sequence is Calmodulin-like protein 3 (183 aa).

EF-hand domains lie at 7-42 (EQIA…LGQS), 43-78 (PTEA…KLRD), 80-115 (GAED…LSDP), and 116-151 (LSDD…KRRQ). Residues Asp20, Asp22, Asp24, Thr26, Glu31, Asp56, Asp58, Ser60, Ser62, Glu67, Asp93, Asp95, Asn97, Glu104, Asp129, Asp131, Asp133, Gln135, and Glu140 each coordinate Ca(2+). The interval 154–183 (MEGHGSGGHRSSNSHKKSGCCGPNSSCTIL) is disordered. Residues Cys173 and Cys174 are each lipidated (S-palmitoyl cysteine). The residue at position 180 (Cys180) is a Cysteine methyl ester. Cys180 carries S-farnesyl cysteine lipidation. The propeptide at 181–183 (TIL) is removed in mature form.

The protein belongs to the calmodulin family.

It is found in the membrane. Its function is as follows. Potential calcium sensor. This is Calmodulin-like protein 3 (CML3) from Oryza sativa subsp. japonica (Rice).